A 242-amino-acid polypeptide reads, in one-letter code: Methylthioribulose-1-phosphate dehydratase (242 aa).

The interval 1 to 23 is disordered; sequence MTDQREEPQGSNDHLVRSSDPEH. Residue Cys-102 coordinates substrate. The Zn(2+) site is built by His-119 and His-121. The active-site Proton donor/acceptor is the Glu-148. His-204 provides a ligand contact to Zn(2+).

Belongs to the aldolase class II family. MtnB subfamily. Requires Zn(2+) as cofactor.

The protein resides in the cytoplasm. The enzyme catalyses 5-(methylsulfanyl)-D-ribulose 1-phosphate = 5-methylsulfanyl-2,3-dioxopentyl phosphate + H2O. It participates in amino-acid biosynthesis; L-methionine biosynthesis via salvage pathway; L-methionine from S-methyl-5-thio-alpha-D-ribose 1-phosphate: step 2/6. In terms of biological role, catalyzes the dehydration of methylthioribulose-1-phosphate (MTRu-1-P) into 2,3-diketo-5-methylthiopentyl-1-phosphate (DK-MTP-1-P). The polypeptide is Methylthioribulose-1-phosphate dehydratase (Uncinocarpus reesii (strain UAMH 1704)).